An 82-amino-acid polypeptide reads, in one-letter code: Large ribosomal subunit protein bL31B (82 aa).

Belongs to the bacterial ribosomal protein bL31 family. Type B subfamily. In terms of assembly, part of the 50S ribosomal subunit.

The protein is Large ribosomal subunit protein bL31B of Pectobacterium carotovorum subsp. carotovorum (strain PC1).